The primary structure comprises 386 residues: DNA dC-&gt;dU-editing enzyme APOBEC-3D (386 aa).

CMP/dCMP-type deaminase domains lie at 29 to 145 (GRSY…DWRW) and 187 to 334 (DDNY…LCSL). Residues H78, C109, C112, and H262 each coordinate Zn(2+). Catalysis depends on E264, which acts as the Proton donor. Residues C293 and C296 each contribute to the Zn(2+) site.

This sequence belongs to the cytidine and deoxycytidylate deaminase family. Can form homo- and heterodimers with APOBEC3F and APOBEC3G. Interacts with L1RE1; this interaction inhibits LINE-1 retrotransposition. As to quaternary structure, (Microbial infection) Interacts with HIV-1 Vif. This interaction triggers APOBEC3D polyubiquitylation and degradation by the 26S proteasome. Zn(2+) serves as cofactor. As to expression, expressed in lymphoid organs. Also detected in non-lymphoid tissues including lung.

It is found in the cytoplasm. The protein localises to the P-body. It carries out the reaction a 2'-deoxycytidine in single-stranded DNA + H2O + H(+) = a 2'-deoxyuridine in single-stranded DNA + NH4(+). With respect to regulation, (Microbial infection) Antiviral activity is neutralized by the HIV-1 virion infectivity factor (Vif), that prevents its incorporation into progeny virions by both inhibiting its translation and/or by inducing its ubiquitination and subsequent degradation by the 26S proteasome. Its function is as follows. DNA deaminase (cytidine deaminase) which acts as an inhibitor of retrovirus replication and retrotransposon mobility via deaminase-dependent and -independent mechanisms. Exhibits antiviral activity against HIV-1. After the penetration of retroviral nucleocapsids into target cells of infection and the initiation of reverse transcription, it can induce the conversion of cytosine to uracil in the minus-sense single-strand viral DNA, leading to G-to-A hypermutations in the subsequent plus-strand viral DNA. The resultant detrimental levels of mutations in the proviral genome, along with a deamination-independent mechanism that works prior to the proviral integration, together exert efficient antiretroviral effects in infected target cells. Selectively targets single-stranded DNA and does not deaminate double-stranded DNA or single- or double-stranded RNA. Also inhibits the mobility of LTR and non-LTR retrotransposons. (Microbial infection) Enhances hepatitis B virus/HBV replication by excluding restriction factors APOBEC3F and APOBEC3G from HBV capsids. This chain is DNA dC-&gt;dU-editing enzyme APOBEC-3D, found in Homo sapiens (Human).